A 477-amino-acid polypeptide reads, in one-letter code: Ribulose bisphosphate carboxylase large chain (477 aa).

The propeptide occupies 1–2; the sequence is MS. Proline 3 bears the N-acetylproline mark. Lysine 14 bears the N6,N6,N6-trimethyllysine mark. Positions 123 and 173 each coordinate substrate. Lysine 175 (proton acceptor) is an active-site residue. Lysine 177 is a substrate binding site. Positions 201, 203, and 204 each coordinate Mg(2+). Lysine 201 is subject to N6-carboxylysine. The Proton acceptor role is filled by histidine 294. Substrate contacts are provided by arginine 295, histidine 327, and serine 379.

This sequence belongs to the RuBisCO large chain family. Type I subfamily. In terms of assembly, heterohexadecamer of 8 large chains and 8 small chains; disulfide-linked. The disulfide link is formed within the large subunit homodimers. Mg(2+) is required as a cofactor. Post-translationally, the disulfide bond which can form in the large chain dimeric partners within the hexadecamer appears to be associated with oxidative stress and protein turnover.

The protein resides in the plastid. It is found in the chloroplast. The enzyme catalyses 2 (2R)-3-phosphoglycerate + 2 H(+) = D-ribulose 1,5-bisphosphate + CO2 + H2O. It catalyses the reaction D-ribulose 1,5-bisphosphate + O2 = 2-phosphoglycolate + (2R)-3-phosphoglycerate + 2 H(+). Its function is as follows. RuBisCO catalyzes two reactions: the carboxylation of D-ribulose 1,5-bisphosphate, the primary event in carbon dioxide fixation, as well as the oxidative fragmentation of the pentose substrate in the photorespiration process. Both reactions occur simultaneously and in competition at the same active site. In Oryza nivara (Indian wild rice), this protein is Ribulose bisphosphate carboxylase large chain.